We begin with the raw amino-acid sequence, 331 residues long: Ketol-acid reductoisomerase (NADP(+)) (331 aa).

Residues 2–182 (AKMYYDQDAD…GGTKAGAIET (181 aa)) form the KARI N-terminal Rossmann domain. Residues 25-28 (FGSQ), serine 51, serine 53, and 83-86 (DEKQ) contribute to the NADP(+) site. The active site involves histidine 108. Glycine 134 is a binding site for NADP(+). In terms of domain architecture, KARI C-terminal knotted spans 183-328 (TFKEETETDL…KSLREMMPWL (146 aa)). The Mg(2+) site is built by aspartate 191, glutamate 195, glutamate 227, and glutamate 231. Serine 252 contacts substrate.

It belongs to the ketol-acid reductoisomerase family. It depends on Mg(2+) as a cofactor.

The catalysed reaction is (2R)-2,3-dihydroxy-3-methylbutanoate + NADP(+) = (2S)-2-acetolactate + NADPH + H(+). It carries out the reaction (2R,3R)-2,3-dihydroxy-3-methylpentanoate + NADP(+) = (S)-2-ethyl-2-hydroxy-3-oxobutanoate + NADPH + H(+). Its pathway is amino-acid biosynthesis; L-isoleucine biosynthesis; L-isoleucine from 2-oxobutanoate: step 2/4. It participates in amino-acid biosynthesis; L-valine biosynthesis; L-valine from pyruvate: step 2/4. Its function is as follows. Involved in the biosynthesis of branched-chain amino acids (BCAA). Catalyzes an alkyl-migration followed by a ketol-acid reduction of (S)-2-acetolactate (S2AL) to yield (R)-2,3-dihydroxy-isovalerate. In the isomerase reaction, S2AL is rearranged via a Mg-dependent methyl migration to produce 3-hydroxy-3-methyl-2-ketobutyrate (HMKB). In the reductase reaction, this 2-ketoacid undergoes a metal-dependent reduction by NADPH to yield (R)-2,3-dihydroxy-isovalerate. The sequence is that of Ketol-acid reductoisomerase (NADP(+)) from Caldanaerobacter subterraneus subsp. tengcongensis (strain DSM 15242 / JCM 11007 / NBRC 100824 / MB4) (Thermoanaerobacter tengcongensis).